The primary structure comprises 623 residues: Chaperone protein HtpG (623 aa).

Positions 1–336 (MVSKQQTMGF…ASDLPLNISR (336 aa)) are a; substrate-binding. The interval 337-550 (EILQDNKQVE…EQDMGLEMQR (214 aa)) is b. The segment at 551 to 623 (ILQAAGQQIP…NRVNRLLVSS (73 aa)) is c.

It belongs to the heat shock protein 90 family. Homodimer.

The protein resides in the cytoplasm. Its function is as follows. Molecular chaperone. Has ATPase activity. The sequence is that of Chaperone protein HtpG from Legionella pneumophila (strain Lens).